Reading from the N-terminus, the 329-residue chain is Transposable element Tc3 transposase (329 aa).

The DNA-binding element occupies P2–T135.

Belongs to the transposase 5 family. As to quaternary structure, homodimer or homotetramer.

The protein localises to the nucleus. Functionally, binds specifically to the terminal nucleotides of the TC3 inverted repeat. Its expression results in frequent excision and transposition of endogenous TC3 elements. TC3 transposase acts by making double strand breaks at the ends of TC3 element. The excised element would then be inserted into a target sequence. This is Transposable element Tc3 transposase (tc3a) from Caenorhabditis elegans.